Reading from the N-terminus, the 255-residue chain is tRNA (guanine-N(1)-)-methyltransferase (255 aa).

Residues G113 and 133-138 (IGDYVL) contribute to the S-adenosyl-L-methionine site.

It belongs to the RNA methyltransferase TrmD family. In terms of assembly, homodimer.

It localises to the cytoplasm. The enzyme catalyses guanosine(37) in tRNA + S-adenosyl-L-methionine = N(1)-methylguanosine(37) in tRNA + S-adenosyl-L-homocysteine + H(+). Functionally, specifically methylates guanosine-37 in various tRNAs. The protein is tRNA (guanine-N(1)-)-methyltransferase of Chloroflexus aggregans (strain MD-66 / DSM 9485).